The sequence spans 380 residues: Queuine tRNA-ribosyltransferase (380 aa).

Residue aspartate 96 is the Proton acceptor of the active site. Substrate contacts are provided by residues 96 to 100 (DSGGF), aspartate 150, glutamine 193, and glycine 220. Positions 251-257 (GVGAPDS) are RNA binding. The active-site Nucleophile is the aspartate 270. Residues 275 to 279 (TRIAR) are RNA binding; important for wobble base 34 recognition. Zn(2+) is bound by residues cysteine 308, cysteine 310, cysteine 313, and histidine 339.

Belongs to the queuine tRNA-ribosyltransferase family. As to quaternary structure, homodimer. Within each dimer, one monomer is responsible for RNA recognition and catalysis, while the other monomer binds to the replacement base PreQ1. It depends on Zn(2+) as a cofactor.

It catalyses the reaction 7-aminomethyl-7-carbaguanine + guanosine(34) in tRNA = 7-aminomethyl-7-carbaguanosine(34) in tRNA + guanine. The protein operates within tRNA modification; tRNA-queuosine biosynthesis. Functionally, catalyzes the base-exchange of a guanine (G) residue with the queuine precursor 7-aminomethyl-7-deazaguanine (PreQ1) at position 34 (anticodon wobble position) in tRNAs with GU(N) anticodons (tRNA-Asp, -Asn, -His and -Tyr). Catalysis occurs through a double-displacement mechanism. The nucleophile active site attacks the C1' of nucleotide 34 to detach the guanine base from the RNA, forming a covalent enzyme-RNA intermediate. The proton acceptor active site deprotonates the incoming PreQ1, allowing a nucleophilic attack on the C1' of the ribose to form the product. After dissociation, two additional enzymatic reactions on the tRNA convert PreQ1 to queuine (Q), resulting in the hypermodified nucleoside queuosine (7-(((4,5-cis-dihydroxy-2-cyclopenten-1-yl)amino)methyl)-7-deazaguanosine). This is Queuine tRNA-ribosyltransferase from Streptococcus agalactiae serotype Ia (strain ATCC 27591 / A909 / CDC SS700).